The following is a 524-amino-acid chain: FAD-dependent monooxygenase opdD (524 aa).

FAD-binding residues include E48 and R145.

Belongs to the paxM FAD-dependent monooxygenase family.

It functions in the pathway secondary metabolite biosynthesis. In terms of biological role, FAD-dependent monooxygenase; part of the gene cluster that mediates the biosynthesis of oxopyrrolidines, polyketide-amino acid hybrid compounds with feature structures of tetramic acid. Does not seem to play a role in oxopyrrolidines A and B biosynthesis. May be involved in further modifications of these oxopyrrolidines. The polypeptide is FAD-dependent monooxygenase opdD (Penicillium oxalicum (strain 114-2 / CGMCC 5302) (Penicillium decumbens)).